The chain runs to 437 residues: Serine--tRNA ligase (437 aa).

An L-serine-binding site is contributed by 240-242; sequence TAE. 271-273 is a binding site for ATP; sequence RAE. L-serine is bound at residue E294. 358–361 serves as a coordination point for ATP; sequence EISS. Residue S394 participates in L-serine binding.

The protein belongs to the class-II aminoacyl-tRNA synthetase family. Type-1 seryl-tRNA synthetase subfamily. In terms of assembly, homodimer. The tRNA molecule binds across the dimer.

Its subcellular location is the cytoplasm. The enzyme catalyses tRNA(Ser) + L-serine + ATP = L-seryl-tRNA(Ser) + AMP + diphosphate + H(+). It carries out the reaction tRNA(Sec) + L-serine + ATP = L-seryl-tRNA(Sec) + AMP + diphosphate + H(+). Its pathway is aminoacyl-tRNA biosynthesis; selenocysteinyl-tRNA(Sec) biosynthesis; L-seryl-tRNA(Sec) from L-serine and tRNA(Sec): step 1/1. Functionally, catalyzes the attachment of serine to tRNA(Ser). Is also able to aminoacylate tRNA(Sec) with serine, to form the misacylated tRNA L-seryl-tRNA(Sec), which will be further converted into selenocysteinyl-tRNA(Sec). This Methylobacterium nodulans (strain LMG 21967 / CNCM I-2342 / ORS 2060) protein is Serine--tRNA ligase.